The primary structure comprises 155 residues: MIEKKVVSQLIEEKLASSSNYLVDVVIKPGNLIVVEIDNDEAVSIDDCAELSRYLEEHLDRDVEDYELEVGSAGITSPFKVLRQYVKNIGNEVEMLLKNGSKLTGVLKSADENGVVVSVEKKVKPEGAKRKVTVVEDESYTFDEIKYTKYLIRFK.

Belongs to the RimP family.

It is found in the cytoplasm. Required for maturation of 30S ribosomal subunits. This is Ribosome maturation factor RimP from Parabacteroides distasonis (strain ATCC 8503 / DSM 20701 / CIP 104284 / JCM 5825 / NCTC 11152).